Here is a 429-residue protein sequence, read N- to C-terminus: D-amino acid dehydrogenase (429 aa).

3–17 (VVVLGSGVVGVTSAY) contacts FAD.

The protein belongs to the DadA oxidoreductase family. It depends on FAD as a cofactor.

The catalysed reaction is a D-alpha-amino acid + A + H2O = a 2-oxocarboxylate + AH2 + NH4(+). The protein operates within amino-acid degradation; D-alanine degradation; NH(3) and pyruvate from D-alanine: step 1/1. Its function is as follows. Oxidative deamination of D-amino acids. This is D-amino acid dehydrogenase from Paraburkholderia xenovorans (strain LB400).